The sequence spans 397 residues: Phosphoglycerate kinase (397 aa).

Residues 21-23 (DFN), Arg37, 60-63 (HLGR), Arg119, and Arg152 contribute to the substrate site. ATP contacts are provided by residues Lys203, Gly294, Glu325, and 354-357 (GGDS).

This sequence belongs to the phosphoglycerate kinase family. As to quaternary structure, monomer.

It localises to the cytoplasm. It carries out the reaction (2R)-3-phosphoglycerate + ATP = (2R)-3-phospho-glyceroyl phosphate + ADP. The protein operates within carbohydrate degradation; glycolysis; pyruvate from D-glyceraldehyde 3-phosphate: step 2/5. This Chlorobium phaeobacteroides (strain BS1) protein is Phosphoglycerate kinase.